A 238-amino-acid chain; its full sequence is Aspartate/glutamate leucyltransferase (238 aa).

The protein belongs to the R-transferase family. Bpt subfamily.

It is found in the cytoplasm. It carries out the reaction N-terminal L-glutamyl-[protein] + L-leucyl-tRNA(Leu) = N-terminal L-leucyl-L-glutamyl-[protein] + tRNA(Leu) + H(+). The enzyme catalyses N-terminal L-aspartyl-[protein] + L-leucyl-tRNA(Leu) = N-terminal L-leucyl-L-aspartyl-[protein] + tRNA(Leu) + H(+). In terms of biological role, functions in the N-end rule pathway of protein degradation where it conjugates Leu from its aminoacyl-tRNA to the N-termini of proteins containing an N-terminal aspartate or glutamate. This chain is Aspartate/glutamate leucyltransferase, found in Aeromonas hydrophila subsp. hydrophila (strain ATCC 7966 / DSM 30187 / BCRC 13018 / CCUG 14551 / JCM 1027 / KCTC 2358 / NCIMB 9240 / NCTC 8049).